The primary structure comprises 161 residues: Endoribonuclease YbeY (161 aa).

The Zn(2+) site is built by His-121, His-125, and His-131.

This sequence belongs to the endoribonuclease YbeY family. Requires Zn(2+) as cofactor.

It is found in the cytoplasm. Its function is as follows. Single strand-specific metallo-endoribonuclease involved in late-stage 70S ribosome quality control and in maturation of the 3' terminus of the 16S rRNA. This Xanthomonas euvesicatoria pv. vesicatoria (strain 85-10) (Xanthomonas campestris pv. vesicatoria) protein is Endoribonuclease YbeY.